We begin with the raw amino-acid sequence, 136 residues long: Large ribosomal subunit protein eL27 (136 aa).

Residues 5–40 form the KOW domain; it reads MKPGKVVMVLAGRYAGRKAVIVKNIDDGTADRPYSH.

It belongs to the eukaryotic ribosomal protein eL27 family. Component of the large ribosomal subunit.

It is found in the cytoplasm. The protein resides in the cytosol. It localises to the rough endoplasmic reticulum. Functionally, component of the large ribosomal subunit. The protein is Large ribosomal subunit protein eL27 (rpl27) of Hippocampus comes (Tiger tail seahorse).